A 210-amino-acid polypeptide reads, in one-letter code: Probable nicotinate-nucleotide adenylyltransferase (210 aa).

It belongs to the NadD family.

The enzyme catalyses nicotinate beta-D-ribonucleotide + ATP + H(+) = deamido-NAD(+) + diphosphate. Its pathway is cofactor biosynthesis; NAD(+) biosynthesis; deamido-NAD(+) from nicotinate D-ribonucleotide: step 1/1. Functionally, catalyzes the reversible adenylation of nicotinate mononucleotide (NaMN) to nicotinic acid adenine dinucleotide (NaAD). The chain is Probable nicotinate-nucleotide adenylyltransferase from Vesicomyosocius okutanii subsp. Calyptogena okutanii (strain HA).